We begin with the raw amino-acid sequence, 217 residues long: Deoxyribose-phosphate aldolase (217 aa).

D89 serves as the catalytic Proton donor/acceptor. Catalysis depends on K151, which acts as the Schiff-base intermediate with acetaldehyde. The active-site Proton donor/acceptor is the K180.

Belongs to the DeoC/FbaB aldolase family. DeoC type 1 subfamily.

It localises to the cytoplasm. The enzyme catalyses 2-deoxy-D-ribose 5-phosphate = D-glyceraldehyde 3-phosphate + acetaldehyde. It functions in the pathway carbohydrate degradation; 2-deoxy-D-ribose 1-phosphate degradation; D-glyceraldehyde 3-phosphate and acetaldehyde from 2-deoxy-alpha-D-ribose 1-phosphate: step 2/2. Catalyzes a reversible aldol reaction between acetaldehyde and D-glyceraldehyde 3-phosphate to generate 2-deoxy-D-ribose 5-phosphate. In Mycoplasma mobile (strain ATCC 43663 / 163K / NCTC 11711) (Mesomycoplasma mobile), this protein is Deoxyribose-phosphate aldolase.